A 413-amino-acid polypeptide reads, in one-letter code: Cell surface GPI-anchored protein ECM33 (413 aa).

The signal sequence occupies residues 1–20 (MQIKSFLLPIVAALLTSVSA). N-linked (GlcNAc...) asparagine glycosylation is found at Asn-93, Asn-102, Asn-172, Asn-209, Asn-222, Asn-227, Asn-279, Asn-290, Asn-306, Asn-322, and Asn-382. The interval 347–390 (YVCTHPANPSSSSKSGSSTQTGKSDSKSSDGSSSSNSSSSSKKG) is disordered. The segment covering 356–390 (SSSSKSGSSTQTGKSDSKSSDGSSSSNSSSSSKKG) has biased composition (low complexity). Gly-390 carries the GPI-anchor amidated glycine lipid modification. Residues 391–413 (ASNVLVVPGMVLTTALGVLLALI) constitute a propeptide, removed in mature form.

The protein belongs to the SPS2 family.

The protein localises to the cell membrane. It is found in the secreted. The protein resides in the cell wall. Cell surface protein required for proper cell wall integrity and for the correct assembly of the mannoprotein outer layer of the cell wall. The chain is Cell surface GPI-anchored protein ECM33 (ECM331) from Candida albicans (strain SC5314 / ATCC MYA-2876) (Yeast).